The following is an 886-amino-acid chain: Probable mixed-linked glucan synthase 8 (886 aa).

The next 2 membrane-spanning stretches (helical) occupy residues 87–107 (ILLH…VLFF) and 118–138 (GMFF…SWLL). The active site involves D213. Substrate-binding residues include D413 and D415. The active site involves D577. Transmembrane regions (helical) follow at residues 659-679 (VFLL…IFYI), 683-703 (FPTY…IGMV), 723-743 (IIGA…KCFG), 775-795 (LLFP…AAIG), 812-832 (LGLV…LGIM), and 840-860 (YILF…DIAI).

The protein belongs to the glycosyltransferase 2 family. Plant cellulose synthase-like F subfamily.

The protein localises to the golgi apparatus membrane. Functionally, may catalyze both beta-1,3 and beta-1,4 glycosidic linkage on beta-D-glucan. Essential for (1,3;1,4)-beta-D-glucans synthesis in grasses and cereals (Poaceae). The mixed-linked glucans (which are not present in walls of dicotyledons or most other monocotyledonous plants) are particularly important constituents of the walls of the starchy endosperm and aleurone cells of cereal grains such as oats, wheat, rice and barley. They can account for up to 70% by weight of the wall. This chain is Probable mixed-linked glucan synthase 8 (CSFL8), found in Oryza sativa subsp. japonica (Rice).